Consider the following 356-residue polypeptide: Histidinol-phosphate aminotransferase (356 aa).

An N6-(pyridoxal phosphate)lysine modification is found at lysine 214.

This sequence belongs to the class-II pyridoxal-phosphate-dependent aminotransferase family. Histidinol-phosphate aminotransferase subfamily. As to quaternary structure, homodimer. The cofactor is pyridoxal 5'-phosphate.

It carries out the reaction L-histidinol phosphate + 2-oxoglutarate = 3-(imidazol-4-yl)-2-oxopropyl phosphate + L-glutamate. The protein operates within amino-acid biosynthesis; L-histidine biosynthesis; L-histidine from 5-phospho-alpha-D-ribose 1-diphosphate: step 7/9. This Escherichia coli O81 (strain ED1a) protein is Histidinol-phosphate aminotransferase.